Here is a 150-residue protein sequence, read N- to C-terminus: UPF0208 membrane protein VV1_2222 (150 aa).

The next 2 helical transmembrane spans lie at 42–62 (FGIK…MAFN) and 70–90 (AIVM…WLGH).

This sequence belongs to the UPF0208 family.

The protein resides in the cell inner membrane. The polypeptide is UPF0208 membrane protein VV1_2222 (Vibrio vulnificus (strain CMCP6)).